The following is a 389-amino-acid chain: COP9 signalosome complex subunit 11 (389 aa).

The 170-residue stretch at 143–312 (QLIIDIPNLV…ILYQKFDPQM (170 aa)) folds into the PCI domain.

In terms of assembly, component of a COP9 signalosome-like (CSN) complex.

It is found in the cytoplasm. Its subcellular location is the nucleus. Functionally, component of the COP9 signalosome (CSN) complex that acts as an regulator of the ubiquitin (Ubl) conjugation pathway by mediating the deneddylation of the cullin subunit of SCF-type E3 ubiquitin-protein ligase complexes The CSN complex is involved in the regulation of the mating pheromone response. PCI8 may also be involved in transcriptional and translational control. The polypeptide is COP9 signalosome complex subunit 11 (PCI8) (Kluyveromyces lactis (strain ATCC 8585 / CBS 2359 / DSM 70799 / NBRC 1267 / NRRL Y-1140 / WM37) (Yeast)).